The primary structure comprises 750 residues: Glutathione biosynthesis bifunctional protein GshAB (750 aa).

Positions 1 to 333 (MIIDRLLQRS…EANRLNDLIA (333 aa)) are glutamate--cysteine ligase. The segment at 32 to 51 (QPTQRVAQTPHPKTLGSRNY) is disordered. Positions 489–747 (KKILDEKHFP…ITPRILAKLF (259 aa)) constitute an ATP-grasp domain. An ATP-binding site is contributed by 516–574 (SQIQDKPIVVKPKSTNFGLGISIFKTSANLASYEKAIDIAFTEDSAILVEEYIEGTEYR). Residues Asp-696, Glu-717, and Asn-719 each coordinate Mg(2+). The Mn(2+) site is built by Asp-696, Glu-717, and Asn-719.

This sequence in the N-terminal section; belongs to the glutamate--cysteine ligase type 1 family. Type 2 subfamily. As to quaternary structure, monomer. The cofactor is Mg(2+). Mn(2+) serves as cofactor.

The enzyme catalyses L-cysteine + L-glutamate + ATP = gamma-L-glutamyl-L-cysteine + ADP + phosphate + H(+). The catalysed reaction is gamma-L-glutamyl-L-cysteine + glycine + ATP = glutathione + ADP + phosphate + H(+). Its pathway is sulfur metabolism; glutathione biosynthesis; glutathione from L-cysteine and L-glutamate: step 1/2. The protein operates within sulfur metabolism; glutathione biosynthesis; glutathione from L-cysteine and L-glutamate: step 2/2. In terms of biological role, synthesizes glutathione from L-glutamate and L-cysteine via gamma-L-glutamyl-L-cysteine. This Streptococcus agalactiae serotype III (strain NEM316) protein is Glutathione biosynthesis bifunctional protein GshAB.